A 156-amino-acid polypeptide reads, in one-letter code: Small ribosomal subunit protein uS7 (156 aa).

This sequence belongs to the universal ribosomal protein uS7 family. As to quaternary structure, part of the 30S ribosomal subunit. Contacts proteins S9 and S11.

Its function is as follows. One of the primary rRNA binding proteins, it binds directly to 16S rRNA where it nucleates assembly of the head domain of the 30S subunit. Is located at the subunit interface close to the decoding center, probably blocks exit of the E-site tRNA. The protein is Small ribosomal subunit protein uS7 of Mycolicibacterium smegmatis (strain ATCC 700084 / mc(2)155) (Mycobacterium smegmatis).